Reading from the N-terminus, the 864-residue chain is Dynamin-1 (864 aa).

Residues 28 to 294 enclose the Dynamin-type G domain; sequence DLDLPQIAVV…LTNHIRDTLP (267 aa). Positions 38 to 45 are G1 motif; sequence GGQSAGKS. Residues S41, G43, K44, S45, S46, R59, and G60 each contribute to the GDP site. The G2 motif stretch occupies residues 64–66; it reads VTR. Y80 is modified (phosphotyrosine). The residue at position 125 (Y125) is a 3'-nitrotyrosine; alternate. Position 125 is a phosphotyrosine; alternate (Y125). Positions 136–139 are G3 motif; that stretch reads DLPG. Positions 205–208 are G4 motif; sequence TKLD. GDP is bound by residues K206, D208, D211, N236, R237, and Q239. Residues 235–238 form a G5 motif region; the sequence is VNRS. S306 and S347 each carry phosphoserine. Y354 is subject to Phosphotyrosine. S512 carries the phosphoserine modification. The region spanning 519–625 is the PH domain; sequence LVIRKGWLTI…WKASFLRAGV (107 aa). A GED domain is found at 659 to 750; the sequence is VETIRNLVDS…IIGDINTTTV (92 aa). Positions 767–864 are disordered; that stretch reads SVPAGRRSPT…PESPRPPFDL (98 aa). S774 carries the post-translational modification Phosphoserine; by CDK5. The residue at position 778 (S778) is a Phosphoserine. Residue R796 is modified to Omega-N-methylarginine. Position 822 is a phosphoserine (S822). The segment covering 825–843 has biased composition (pro residues); it reads PFGPPPQVPSRPNRAPPGV. 2 positions are modified to phosphoserine: S851 and S857.

This sequence belongs to the TRAFAC class dynamin-like GTPase superfamily. Dynamin/Fzo/YdjA family. Homodimer; homodimerization is mediated by the dynamin-type G domain which promotes assembly-stimulated GTPase activity. Homo-tetramer formed from two dimers in the absence of lipid. Oligomerizes into a helical polymer that self-assembles around the vesicle membrane, when associated to the menbrane through lipid binding. Interacts (via C-terminal proline-rich domain (PRD)) with SNX9 (via SH3 domain); this interaction allows regulation of DNM1 self-assembly during late stages of endocytic vesicle formation and supports DNM1's early functions in accelerating clathrin-coated pits (CCPs) maturation in non neuronals cell. Interacts (via C-terminal proline-rich domain (PRD)) with MYO1E (via SH3 domain); this interaction regulates receptor-mediated endocytosis. Interacts with SNX33 (via SH3 domain); this interaction decreases DNM1-dependent endocytosis. Interacts with DIAPH1. Interacts with GRB2 (via SH3 domain); this interaction mediates disassembly of DNM1 polymers, therefore modulates self-assembly. Forms a complex with BIN1 (via SH3 domain) and SH3GL2 (via SH3 domain). Forms a complex with SH3GL2 (via SH3 domain) and AMPH (via SH3 domain). Forms a complex with SH3GL2 (via SH3 domain) and SYNJ1. Interacts with AMPH. Interacts (via C-terminal proline-rich domain (PRD)) with SYT1; this interaction facilitates vesicle fission during clathrin-mediated endocytosis (CME). Interacts (via C-terminal proline-rich domain (PRD)) with PLCG1 (via SH3 domain); this interaction stimulates the release of GDP from DNM1 and enhances DNM1-dependent endocytosis. Interacts with SNPH; this interaction inhibits the binding of DNM1 to AMPH and DNM1-receptor-mediated endocytosis. Interacts with CAV1. Interacts with SH3GLB1 (via SH3 domain). Interacts with PACSIN1 (via SH3 domain), PACSIN2 (via SH3 domain) and PACSIN3 (via SH3 domain). Interacts with UNC119; this interaction decreases DNM1's GTPase activity and affects DNM1's interaction with AMPH. Interacts (GTP-bound form) with DNAJC6; this interaction allows clathrin-coated vesicle (CCV) formation at the plasma membrane. Post-translationally, phosphorylation at Ser-774 by GSK3B/GSK3-beta leads to inactivation of receptor-mediated endocytosis in non-neuronal cells. Dephosphorylation at Ser-774, through the EGFR downstream signaling, leads to activation and regulates early stages of clathrin-mediated endocytosis (CME). Phosphorylated by CDK5 leading to synaptic vesicle endocytosis (SVE) activation. Brain-specific (peripheral sensory neurons).

It localises to the cytoplasmic vesicle. The protein resides in the clathrin-coated vesicle. It is found in the golgi apparatus. Its subcellular location is the cell membrane. The protein localises to the membrane. It localises to the clathrin-coated pit. The protein resides in the presynapse. It is found in the secretory vesicle. Its subcellular location is the chromaffin granule. It carries out the reaction GTP + H2O = GDP + phosphate + H(+). Its function is as follows. Catalyzes the hydrolysis of GTP and utilizes this energy to mediate vesicle scission and participates in many forms of endocytosis, such as clathrin-mediated endocytosis or synaptic vesicle endocytosis as well as rapid endocytosis (RE). Associates to the membrane, through lipid binding, and self-assembles into rings and stacks of interconnected rings through oligomerization to form a helical polymer around the vesicle membrane leading to constriction of invaginated coated pits around their necks. Self-assembly of the helical polymer induces membrane tubules narrowing until the polymer reaches a length sufficient to trigger GTP hydrolysis. Depending on the curvature imposed on the tubules, membrane detachment from the helical polymer upon GTP hydrolysis can cause spontaneous hemifission followed by complete fission. May play a role in regulating early stages of clathrin-mediated endocytosis in non-neuronal cells through its activation by dephosphorylation via the signaling downstream of EGFR. Controls vesicle size at a step before fission, during formation of membrane pits, at hippocampal synapses. Controls plastic adaptation of the synaptic vesicle recycling machinery to high levels of activity. Mediates rapid endocytosis (RE), a Ca(2+)-dependent and clathrin- and K(+)-independent process in chromaffin cells. Microtubule-associated force-producing protein involved in producing microtubule bundles and able to bind and hydrolyze GTP. Through its interaction with DNAJC6, acts during the early steps of clathrin-coated vesicle (CCV) formation. The protein is Dynamin-1 (Dnm1) of Rattus norvegicus (Rat).